We begin with the raw amino-acid sequence, 350 residues long: MTYKITSLAGDGIGPEIMTSGLQVLEAVAKKYNHTFEIESHPFGGAGIDVAQDPIPSSTLKACQDADAILLGAIGGPKWDNAPKRPEDGLLALRKALGLFANIRPIQVPSSITHLSPLKKEIVENTDFVVVRELTGGLYFGEPKHWDESAAVDSLTYTRAEIERIIEKAFEIAATRNKKVTSVDKANVLASSKLWRKIAEEVASRHPDITLEHLYIDAAAMLMIQRPTTFDVIVTENLFGDILSDEASVITGSLGMLPSASHAENGPSLYEPIHGSAPDIANQNIANPMSMISSVSMMLRQSFSLFKEADAIDAAATRTMQAGFLTADLGGNTTTTDFTNEVLKQIEGGE.

76 to 87 (GPKWDNAPKRPE) provides a ligand contact to NAD(+). Substrate is bound by residues arginine 94, arginine 104, arginine 132, and aspartate 217. Residues aspartate 217, aspartate 241, and aspartate 245 each contribute to the Mg(2+) site. 275–287 (GSAPDIANQNIAN) serves as a coordination point for NAD(+).

This sequence belongs to the isocitrate and isopropylmalate dehydrogenases family. LeuB type 1 subfamily. As to quaternary structure, homodimer. Mg(2+) is required as a cofactor. Mn(2+) serves as cofactor.

The protein resides in the cytoplasm. It carries out the reaction (2R,3S)-3-isopropylmalate + NAD(+) = 4-methyl-2-oxopentanoate + CO2 + NADH. It functions in the pathway amino-acid biosynthesis; L-leucine biosynthesis; L-leucine from 3-methyl-2-oxobutanoate: step 3/4. In terms of biological role, catalyzes the oxidation of 3-carboxy-2-hydroxy-4-methylpentanoate (3-isopropylmalate) to 3-carboxy-4-methyl-2-oxopentanoate. The product decarboxylates to 4-methyl-2 oxopentanoate. The chain is 3-isopropylmalate dehydrogenase from Listeria monocytogenes serovar 1/2a (strain ATCC BAA-679 / EGD-e).